The sequence spans 481 residues: UDP-N-acetylmuramoyl-L-alanyl-D-glutamate--L-lysine ligase (481 aa).

S42 serves as a coordination point for UDP-N-acetyl-alpha-D-muramoyl-L-alanyl-D-glutamate. 118–124 (GTKGKTT) contributes to the ATP binding site. UDP-N-acetyl-alpha-D-muramoyl-L-alanyl-D-glutamate-binding positions include 160 to 161 (TT), S187, and R195. At K229 the chain carries N6-carboxylysine. Positions 404-407 (DDPN) match the L-lysine recognition motif motif.

This sequence belongs to the MurCDEF family. MurE subfamily. In terms of processing, carboxylation is probably crucial for Mg(2+) binding and, consequently, for the gamma-phosphate positioning of ATP.

Its subcellular location is the cytoplasm. The enzyme catalyses UDP-N-acetyl-alpha-D-muramoyl-L-alanyl-D-glutamate + L-lysine + ATP = UDP-N-acetyl-alpha-D-muramoyl-L-alanyl-gamma-D-glutamyl-L-lysine + ADP + phosphate + H(+). Its pathway is cell wall biogenesis; peptidoglycan biosynthesis. Its function is as follows. Catalyzes the addition of L-lysine to the nucleotide precursor UDP-N-acetylmuramoyl-L-alanyl-D-glutamate (UMAG) in the biosynthesis of bacterial cell-wall peptidoglycan. The polypeptide is UDP-N-acetylmuramoyl-L-alanyl-D-glutamate--L-lysine ligase (Streptococcus suis (strain 98HAH33)).